Reading from the N-terminus, the 88-residue chain is Putative membrane protein insertion efficiency factor (88 aa).

Residues 66-88 form a disordered region; it reads DFVPPKKDKNADSEHSCKAHHHH. Basic and acidic residues predominate over residues 69–82; that stretch reads PPKKDKNADSEHSC.

It belongs to the UPF0161 family.

The protein localises to the cell membrane. Its function is as follows. Could be involved in insertion of integral membrane proteins into the membrane. In Listeria monocytogenes serotype 4a (strain HCC23), this protein is Putative membrane protein insertion efficiency factor.